Here is a 106-residue protein sequence, read N- to C-terminus: MNKIRKGDEVIVLTGRDKGKRGTVSLRKDDSYLVIDGINLVKKHVKPNPMKGTTGGIVEKAMPIHQSNVAIFNAATGKADRVGIKVQADGSRVRVFKSSGAEIKAA.

This sequence belongs to the universal ribosomal protein uL24 family. In terms of assembly, part of the 50S ribosomal subunit.

One of two assembly initiator proteins, it binds directly to the 5'-end of the 23S rRNA, where it nucleates assembly of the 50S subunit. Functionally, one of the proteins that surrounds the polypeptide exit tunnel on the outside of the subunit. The chain is Large ribosomal subunit protein uL24 from Paracidovorax citrulli (strain AAC00-1) (Acidovorax citrulli).